A 257-amino-acid chain; its full sequence is Transmembrane protein C257L (257 aa).

2 helical membrane passes run 123–143 and 163–183; these read LELL…FTAL and MMIF…YVLV.

The protein belongs to the asfivirus C257R family.

It localises to the host membrane. It is found in the virion. This African swine fever virus (isolate Tick/South Africa/Pretoriuskop Pr4/1996) (ASFV) protein is Transmembrane protein C257L.